Reading from the N-terminus, the 476-residue chain is Exoglucanase-6A (476 aa).

The signal sequence occupies residues 1 to 16 (MAKFFLTAAFAAAALA). 2 disulfides stabilise this stretch: Cys33–Cys50 and Cys44–Cys60. The 28-residue stretch at 33-60 (CGGIGFNGPTCCQSGSTCVKQNDWYSQC) folds into the CBM1 domain. The disordered stretch occupies residues 67-94 (TTTSTTSTSSSSTTSRATSTTRTGGVTS). An O-linked (Man...) threonine glycan is attached at Thr144. Ser153 is a glycosylation site (O-linked (Man...) serine). Substrate contacts are provided by Trp163 and Asp165. An N-linked (GlcNAc...) asparagine glycan is attached at Asn167. Residues 200-222 (YDLPDRDCAAAASNGEWAIANNG) form a substrate binding loop 1 region. The active-site Proton donor is Asp252. Residues His297, Trp300, Asn336, Trp397, Lys425, and Glu429 each coordinate substrate. The substrate binding loop 2 stretch occupies residues 423–461 (WVKPGGECDGTSDTTAARYDYHCGLEDALKPAPEAGQWF). Catalysis depends on Asp431, which acts as the Proton acceptor.

The protein belongs to the glycosyl hydrolase 6 (cellulase A) family. Monomer.

It carries out the reaction Hydrolysis of (1-&gt;4)-beta-D-glucosidic linkages in cellulose and cellotetraose, releasing cellobiose from the non-reducing ends of the chains.. Plays a central role in the recycling of plant biomass. The biological conversion of cellulose to glucose generally requires three types of hydrolytic enzymes: (1) Endoglucanases which cut internal beta-1,4-glucosidic bonds; (2) Exocellobiohydrolases that cut the disaccharide cellobiose from the non-reducing end of the cellulose polymer chain; (3) Beta-1,4-glucosidases which hydrolyze the cellobiose and other short cello-oligosaccharides to glucose. The chain is Exoglucanase-6A from Humicola insolens (Soft-rot fungus).